A 469-amino-acid polypeptide reads, in one-letter code: 3-isopropylmalate dehydratase large subunit (469 aa).

[4Fe-4S] cluster contacts are provided by Cys347, Cys410, and Cys413.

Belongs to the aconitase/IPM isomerase family. LeuC type 1 subfamily. In terms of assembly, heterodimer of LeuC and LeuD. [4Fe-4S] cluster serves as cofactor.

It catalyses the reaction (2R,3S)-3-isopropylmalate = (2S)-2-isopropylmalate. Its pathway is amino-acid biosynthesis; L-leucine biosynthesis; L-leucine from 3-methyl-2-oxobutanoate: step 2/4. Catalyzes the isomerization between 2-isopropylmalate and 3-isopropylmalate, via the formation of 2-isopropylmaleate. In Burkholderia thailandensis (strain ATCC 700388 / DSM 13276 / CCUG 48851 / CIP 106301 / E264), this protein is 3-isopropylmalate dehydratase large subunit.